Here is a 221-residue protein sequence, read N- to C-terminus: Small ribosomal subunit protein uS3 (221 aa).

The region spanning isoleucine 39 to lysine 107 is the KH type-2 domain.

It belongs to the universal ribosomal protein uS3 family. As to quaternary structure, part of the 30S ribosomal subunit. Forms a tight complex with proteins S10 and S14.

Its function is as follows. Binds the lower part of the 30S subunit head. Binds mRNA in the 70S ribosome, positioning it for translation. The chain is Small ribosomal subunit protein uS3 from Desulforamulus reducens (strain ATCC BAA-1160 / DSM 100696 / MI-1) (Desulfotomaculum reducens).